Here is a 340-residue protein sequence, read N- to C-terminus: Guanine nucleotide-binding protein subunit beta-4 (340 aa).

Position 2 is an N-acetylserine (serine 2). Position 2 is a phosphoserine (serine 2). 5 WD repeats span residues 53 to 92 (GHLA…KMHA), 95 to 134 (LRSS…GNVR), 141 to 179 (GHTG…QTTT), 182 to 221 (GHSG…CRQS), and 224 to 263 (GHVS…ELLL). Histidine 266 is subject to Phosphohistidine. WD repeat units lie at residues 268–307 (NIIC…RAGV) and 310–339 (GHDN…LRIW).

The protein belongs to the WD repeat G protein beta family. In terms of assembly, g proteins are composed of 3 units, alpha, beta and gamma. Strongly expressed in lung and placenta, whereas it is weakly expressed in brain and heart. Abundantly expressed in the axons and Schwann cells of peripheral nerves.

Guanine nucleotide-binding proteins (G proteins) are involved as a modulator or transducer in various transmembrane signaling systems. The beta and gamma chains are required for the GTPase activity, for replacement of GDP by GTP, and for G protein-effector interaction. The protein is Guanine nucleotide-binding protein subunit beta-4 (GNB4) of Homo sapiens (Human).